The following is a 1011-amino-acid chain: Collagen alpha-2(I) chain (1011 aa).

Residues 1-1011 are disordered; it reads SGGFDFSFLP…FGYEGDFYRA (1011 aa). 4-hydroxyproline occurs at positions 10, 13, 35, and 41. Low complexity predominate over residues 28-67; that stretch reads LMGPRGPPGASGAPGPQGFQGPAGEPGEPGQTGPAGARGP. 5-hydroxylysine; alternate is present on Lys-106. Lys-106 is a glycosylation site (O-linked (Gal...) hydroxylysine; alternate). Residues 167–182 show a composition bias toward low complexity; that stretch reads SVGPVGPAGPIGSAGP. Over residues 282-291 the composition is skewed to gly residues; the sequence is GESGGKGEPG. Low complexity predominate over residues 292-302; that stretch reads SAGPQGPPGSS. Residues 323–332 show a composition bias toward gly residues; it reads GLRGGPGSRG. A compositionally biased stretch (low complexity) spans 345–361; sequence PAGARGASGPAGVRGPS. Residues Pro-367 and Pro-370 each carry the 4-hydroxyproline modification. Residues 396–415 show a composition bias toward low complexity; the sequence is LPGIDGRPGPIGPAGARGEA. The span at 464-473 shows a compositional bias: gly residues; it reads GVQGGKGEQG. Low complexity-rich tracts occupy residues 520–537 and 549–559; these read PGESGAVGPSGAIGSRGP and EPGVVGAPGTA. Positions 560–578 are enriched in gly residues; the sequence is GPAGSGGPGERGAAGIPGG. Low complexity-rich tracts occupy residues 588 to 635 and 642 to 662; these read RGEV…PRGS and VGPAGPNGFAGPAGAAGQPGA. Residues 663–672 show a composition bias toward basic and acidic residues; it reads KGERGTKGPK. The span at 680-690 shows a compositional bias: low complexity; the sequence is PTGPVGSAGPA. A compositionally biased stretch (gly residues) spans 700 to 709; it reads GSRGDGGPPG. Over residues 711 to 720 the composition is skewed to low complexity; that stretch reads TGFPGAAGRT. The span at 757 to 766 shows a compositional bias: gly residues; that stretch reads GETGAGGPPG. 2 stretches are compositionally biased toward low complexity: residues 774–801 and 809–819; these read SGEPGTAGPPGTAGPQGLLGAPGILGLP and LPGVAGAVGEP. Gly residues predominate over residues 820–834; sequence GPLGIGPPGARGDGL. 2 stretches are compositionally biased toward low complexity: residues 843 to 856 and 872 to 887; these read YAGNAGPVGAAGAP and EPGPVGSVGPVGALGP. Residues 897 to 908 show a composition bias toward basic and acidic residues; that stretch reads RGDKGEPGEKGP. Over residues 981-993 the composition is skewed to pro residues; the sequence is SGPPGPPGPPGPP.

The protein belongs to the fibrillar collagen family. Trimers of one alpha 2(I) and two alpha 1(I) chains. Interacts (via C-terminus) with TMEM131 (via PapD-L domain); the interaction is direct and is involved in assembly and TRAPPIII ER-to-Golgi transport complex-dependent secretion of collagen. Prolines at the third position of the tripeptide repeating unit (G-X-Y) are hydroxylated in some or all of the chains. Expressed in bones.

It localises to the secreted. It is found in the extracellular space. Its subcellular location is the extracellular matrix. In terms of biological role, type I collagen is a member of group I collagen (fibrillar forming collagen). The polypeptide is Collagen alpha-2(I) chain (Neocnus comes (Miller's Hispaniolan ground sloth)).